Here is a 694-residue protein sequence, read N- to C-terminus: Elongation factor G (694 aa).

Positions 8-285 (EKVRNIGIAA…AVVELLPSPQ (278 aa)) constitute a tr-type G domain. Residues 17-24 (AHIDAGKT), 81-85 (DTPGH), and 135-138 (NKMD) each bind GTP.

Belongs to the TRAFAC class translation factor GTPase superfamily. Classic translation factor GTPase family. EF-G/EF-2 subfamily.

Its subcellular location is the cytoplasm. Functionally, catalyzes the GTP-dependent ribosomal translocation step during translation elongation. During this step, the ribosome changes from the pre-translocational (PRE) to the post-translocational (POST) state as the newly formed A-site-bound peptidyl-tRNA and P-site-bound deacylated tRNA move to the P and E sites, respectively. Catalyzes the coordinated movement of the two tRNA molecules, the mRNA and conformational changes in the ribosome. The sequence is that of Elongation factor G (fusA) from Synechococcus sp. (strain ATCC 27144 / PCC 6301 / SAUG 1402/1) (Anacystis nidulans).